Here is a 93-residue protein sequence, read N- to C-terminus: DNA-directed RNA polymerase subunit omega (93 aa).

This sequence belongs to the RNA polymerase subunit omega family. As to quaternary structure, the RNAP catalytic core consists of 2 alpha, 1 beta, 1 beta' and 1 omega subunit. When a sigma factor is associated with the core the holoenzyme is formed, which can initiate transcription.

It carries out the reaction RNA(n) + a ribonucleoside 5'-triphosphate = RNA(n+1) + diphosphate. Promotes RNA polymerase assembly. Latches the N- and C-terminal regions of the beta' subunit thereby facilitating its interaction with the beta and alpha subunits. The sequence is that of DNA-directed RNA polymerase subunit omega from Acinetobacter baylyi (strain ATCC 33305 / BD413 / ADP1).